We begin with the raw amino-acid sequence, 201 residues long: Glutathione peroxidase 1, mitochondrial (201 aa).

The transit peptide at 1 to 27 (MLLTRKNVAVRPARAARRDVRAMSLLG) directs the protein to the mitochondrion. U75 is an active-site residue. Position 75 (U75) is a non-standard amino acid, selenocysteine.

The protein localises to the mitochondrion. It carries out the reaction 2 glutathione + H2O2 = glutathione disulfide + 2 H2O. Its function is as follows. May constitute a glutathione peroxidase-like protective system against oxidative stresses. Hydrogen peroxide, tert-butyl hydroperoxide and cumene, but not phosphatidylcholine hydroperoxide, can act as acceptors. The sequence is that of Glutathione peroxidase 1, mitochondrial from Chlamydomonas reinhardtii (Chlamydomonas smithii).